Reading from the N-terminus, the 138-residue chain is Small ribosomal subunit protein uS11c (138 aa).

A disordered region spans residues 1–23; the sequence is MAKPILRIGSRKNTRSGSRKNVR. Basic residues predominate over residues 9 to 23; that stretch reads GSRKNTRSGSRKNVR.

It belongs to the universal ribosomal protein uS11 family. In terms of assembly, part of the 30S ribosomal subunit.

The protein resides in the plastid. It localises to the chloroplast. This is Small ribosomal subunit protein uS11c from Crucihimalaya wallichii (Rock-cress).